Reading from the N-terminus, the 188-residue chain is Elongation factor P (188 aa).

The protein belongs to the elongation factor P family.

The protein localises to the cytoplasm. Its pathway is protein biosynthesis; polypeptide chain elongation. Functionally, involved in peptide bond synthesis. Stimulates efficient translation and peptide-bond synthesis on native or reconstituted 70S ribosomes in vitro. Probably functions indirectly by altering the affinity of the ribosome for aminoacyl-tRNA, thus increasing their reactivity as acceptors for peptidyl transferase. The protein is Elongation factor P of Ureaplasma urealyticum serovar 10 (strain ATCC 33699 / Western).